The following is a 213-amino-acid chain: MQKKIFLLEDDYLLSESVKEFLEHLGYEVFCAFNGKEAYERLSVERFNLLLLDVQVPEMNSLELFKRIKNDFLISTPVIFITALQDNATLKNAFNLGASDYLKKPFDLDELEARIKRFFNDDPIEIMPNIFYHQNCLSVRGKKEILPPKTAQLLEYFLEHKGQIISSQALENNLWEQAIDDSTLRTYIKVLRKLLGKNCIETHKGVGYRFNPL.

Residues 4-119 (KIFLLEDDYL…ELEARIKRFF (116 aa)) enclose the Response regulatory domain. Aspartate 53 bears the 4-aspartylphosphate mark. The ompR/PhoB-type DNA-binding region spans 121-212 (DDPIEIMPNI…HKGVGYRFNP (92 aa)).

Phosphorylated by CrdS.

In terms of biological role, member of the two-component regulatory system CrdR/CrdS that induces the transcriptional induction of the copper resistance determinant CrdA. Upon phosphorylation by CrdS, functions as a transcriptional regulator by direct binding to promoter regions of target genes including the crdA promoter or nitric oxide-responsive gene promoters. The sequence is that of Transcriptional regulatory protein CrdR from Helicobacter pylori (strain ATCC 700392 / 26695) (Campylobacter pylori).